The primary structure comprises 377 residues: Succinyl-diaminopimelate desuccinylase (377 aa).

A Zn(2+)-binding site is contributed by histidine 67. Residue aspartate 69 is part of the active site. Aspartate 100 provides a ligand contact to Zn(2+). The Proton acceptor role is filled by glutamate 134. 3 residues coordinate Zn(2+): glutamate 135, glutamate 163, and histidine 349.

The protein belongs to the peptidase M20A family. DapE subfamily. Homodimer. Zn(2+) is required as a cofactor. Co(2+) serves as cofactor.

The catalysed reaction is N-succinyl-(2S,6S)-2,6-diaminopimelate + H2O = (2S,6S)-2,6-diaminopimelate + succinate. The protein operates within amino-acid biosynthesis; L-lysine biosynthesis via DAP pathway; LL-2,6-diaminopimelate from (S)-tetrahydrodipicolinate (succinylase route): step 3/3. Functionally, catalyzes the hydrolysis of N-succinyl-L,L-diaminopimelic acid (SDAP), forming succinate and LL-2,6-diaminopimelate (DAP), an intermediate involved in the bacterial biosynthesis of lysine and meso-diaminopimelic acid, an essential component of bacterial cell walls. This chain is Succinyl-diaminopimelate desuccinylase, found in Haemophilus influenzae (strain PittEE).